The chain runs to 174 residues: Nucleoside-triphosphatase THEP1 (174 aa).

Residues 7-14 and 94-101 each bind ATP; these read GRPGVGKT and LIIIDEIG.

This sequence belongs to the THEP1 NTPase family.

The enzyme catalyses a ribonucleoside 5'-triphosphate + H2O = a ribonucleoside 5'-diphosphate + phosphate + H(+). Its function is as follows. Has nucleotide phosphatase activity towards ATP, GTP, CTP, TTP and UTP. May hydrolyze nucleoside diphosphates with lower efficiency. In Thermotoga sp. (strain RQ2), this protein is Nucleoside-triphosphatase THEP1.